The sequence spans 492 residues: Probable endopolygalacturonase D (492 aa).

The N-terminal stretch at 1 to 16 (MKRSALILSFLPLVFG) is a signal peptide. C151 and C166 are joined by a disulfide. PbH1 repeat units lie at residues 216–238 (GTSV…AYWD), 258–280 (MYNS…EIES), 281–319 (TEHL…DIKE), and 320–341 (SSYF…AVTS). N292 is a glycosylation site (N-linked (GlcNAc...) asparagine). Residue D334 is the Proton donor of the active site. C336 and C352 are joined by a disulfide. Residue H356 is part of the active site. PbH1 repeat units follow at residues 371–392 (VNGV…RIKT), 400–422 (VYNI…DVQQ), and 434–478 (TNGV…SITG). N-linked (GlcNAc...) asparagine glycosylation is found at N407 and N441. 2 disulfide bridges follow: C461–C466 and C484–C491.

The protein belongs to the glycosyl hydrolase 28 family.

Its subcellular location is the secreted. The enzyme catalyses (1,4-alpha-D-galacturonosyl)n+m + H2O = (1,4-alpha-D-galacturonosyl)n + (1,4-alpha-D-galacturonosyl)m.. In terms of biological role, involved in maceration and soft-rotting of plant tissue. Hydrolyzes the 1,4-alpha glycosidic bonds of de-esterified pectate in the smooth region of the plant cell wall. This chain is Probable endopolygalacturonase D (pgaD), found in Aspergillus flavus (strain ATCC 200026 / FGSC A1120 / IAM 13836 / NRRL 3357 / JCM 12722 / SRRC 167).